A 392-amino-acid chain; its full sequence is S-adenosylmethionine synthase (392 aa).

His-17 provides a ligand contact to ATP. Residue Asp-19 participates in Mg(2+) binding. Glu-45 contributes to the K(+) binding site. 2 residues coordinate L-methionine: Glu-58 and Gln-102. Residues 102–112 (QSADIAQGVDA) form a flexible loop region. ATP is bound by residues 169–171 (DAK), 235–236 (KF), Asp-244, 250–251 (RK), Ala-267, and Lys-271. Asp-244 provides a ligand contact to L-methionine. Residue Lys-275 participates in L-methionine binding.

This sequence belongs to the AdoMet synthase family. As to quaternary structure, homotetramer; dimer of dimers. Requires Mg(2+) as cofactor. K(+) is required as a cofactor.

The protein localises to the cytoplasm. It catalyses the reaction L-methionine + ATP + H2O = S-adenosyl-L-methionine + phosphate + diphosphate. Its pathway is amino-acid biosynthesis; S-adenosyl-L-methionine biosynthesis; S-adenosyl-L-methionine from L-methionine: step 1/1. Functionally, catalyzes the formation of S-adenosylmethionine (AdoMet) from methionine and ATP. The overall synthetic reaction is composed of two sequential steps, AdoMet formation and the subsequent tripolyphosphate hydrolysis which occurs prior to release of AdoMet from the enzyme. The polypeptide is S-adenosylmethionine synthase (Methylobacterium sp. (strain 4-46)).